Reading from the N-terminus, the 62-residue chain is Large ribosomal subunit protein uL29 (62 aa).

The protein belongs to the universal ribosomal protein uL29 family.

This is Large ribosomal subunit protein uL29 from Chromobacterium violaceum (strain ATCC 12472 / DSM 30191 / JCM 1249 / CCUG 213 / NBRC 12614 / NCIMB 9131 / NCTC 9757 / MK).